The chain runs to 96 residues: Small cysteine and glycine repeat-containing protein 7 (96 aa).

Positions 4–80 (CGCGSCGGCG…TCGSCGCGCG (77 aa)) are 14 X 2 AA repeats of CG.

It belongs to the KRTAP type 28 family.

In terms of biological role, in the hair cortex, hair keratin intermediate filaments are embedded in an interfilamentous matrix, consisting of hair keratin-associated proteins (KRTAP), which are essential for the formation of a rigid and resistant hair shaft through their extensive disulfide bond cross-linking with abundant cysteine residues of hair keratins. The matrix proteins include the high-sulfur and high-glycine-tyrosine keratins. In Homo sapiens (Human), this protein is Small cysteine and glycine repeat-containing protein 7.